Here is a 570-residue protein sequence, read N- to C-terminus: Proline--tRNA ligase (570 aa).

Belongs to the class-II aminoacyl-tRNA synthetase family. ProS type 1 subfamily. As to quaternary structure, homodimer.

Its subcellular location is the cytoplasm. It carries out the reaction tRNA(Pro) + L-proline + ATP = L-prolyl-tRNA(Pro) + AMP + diphosphate. Its function is as follows. Catalyzes the attachment of proline to tRNA(Pro) in a two-step reaction: proline is first activated by ATP to form Pro-AMP and then transferred to the acceptor end of tRNA(Pro). As ProRS can inadvertently accommodate and process non-cognate amino acids such as alanine and cysteine, to avoid such errors it has two additional distinct editing activities against alanine. One activity is designated as 'pretransfer' editing and involves the tRNA(Pro)-independent hydrolysis of activated Ala-AMP. The other activity is designated 'posttransfer' editing and involves deacylation of mischarged Ala-tRNA(Pro). The misacylated Cys-tRNA(Pro) is not edited by ProRS. The protein is Proline--tRNA ligase of Neisseria meningitidis serogroup B (strain ATCC BAA-335 / MC58).